The following is a 372-amino-acid chain: MTALPQRTLMVMAGGTGGHVFPGLAVAHLMQAWGWKVVWLGNPAGMEATLVPKHGIPMEYVRFGGLRGKGLKTKLMLPLNLLRACTQSLSVLRRVKPDVVLGMGGYITFPAGLMTALSGRPLVLHEQNSIAGLANKVLAKVAKRVLVAFPNALPHGEWTGNPIRAELAGAIAPKARYAQRSGPLNVLVVGGSLGAAALNEVVPRAVALLAPNERPRIVHQAGAKHIEALRENYAAAGLQAGADVELVPFIDDMTSAYANADLVICRSGAMTVSEISAVGVAALFVPFPYAVDDHQTTNAAFLADNGAALVVQQRDLSAETLADWLRSQTRETLAEMAERSRSLAKPDATEQVAQICATVAGSISGASPEGKQ.

Residues T16 to G18, N128, R164, S192, I250, and Q295 contribute to the UDP-N-acetyl-alpha-D-glucosamine site.

This sequence belongs to the glycosyltransferase 28 family. MurG subfamily.

It is found in the cell inner membrane. The enzyme catalyses di-trans,octa-cis-undecaprenyl diphospho-N-acetyl-alpha-D-muramoyl-L-alanyl-D-glutamyl-meso-2,6-diaminopimeloyl-D-alanyl-D-alanine + UDP-N-acetyl-alpha-D-glucosamine = di-trans,octa-cis-undecaprenyl diphospho-[N-acetyl-alpha-D-glucosaminyl-(1-&gt;4)]-N-acetyl-alpha-D-muramoyl-L-alanyl-D-glutamyl-meso-2,6-diaminopimeloyl-D-alanyl-D-alanine + UDP + H(+). The protein operates within cell wall biogenesis; peptidoglycan biosynthesis. In terms of biological role, cell wall formation. Catalyzes the transfer of a GlcNAc subunit on undecaprenyl-pyrophosphoryl-MurNAc-pentapeptide (lipid intermediate I) to form undecaprenyl-pyrophosphoryl-MurNAc-(pentapeptide)GlcNAc (lipid intermediate II). In Paraburkholderia xenovorans (strain LB400), this protein is UDP-N-acetylglucosamine--N-acetylmuramyl-(pentapeptide) pyrophosphoryl-undecaprenol N-acetylglucosamine transferase.